A 233-amino-acid polypeptide reads, in one-letter code: Large ribosomal subunit protein uL2 (233 aa).

The tract at residues 194-233 (HPHGGGNHQHVGRPSTVGRGTPPGRKVGRLSPKRRKKYGR) is disordered. Over residues 219 to 233 (KVGRLSPKRRKKYGR) the composition is skewed to basic residues.

It belongs to the universal ribosomal protein uL2 family. Part of the 50S ribosomal subunit. Forms a bridge to the 30S subunit in the 70S ribosome.

Functionally, one of the primary rRNA binding proteins. Required for association of the 30S and 50S subunits to form the 70S ribosome, for tRNA binding and peptide bond formation. It has been suggested to have peptidyltransferase activity; this is somewhat controversial. Makes several contacts with the 16S rRNA in the 70S ribosome. This Picrophilus torridus (strain ATCC 700027 / DSM 9790 / JCM 10055 / NBRC 100828 / KAW 2/3) protein is Large ribosomal subunit protein uL2.